The chain runs to 220 residues: Thiamine-phosphate synthase (220 aa).

Residues 47 to 51 (QYREK) and N78 each bind 4-amino-2-methyl-5-(diphosphooxymethyl)pyrimidine. Residues D79 and D98 each coordinate Mg(2+). A 4-amino-2-methyl-5-(diphosphooxymethyl)pyrimidine-binding site is contributed by S117. 143–145 (TAT) contributes to the 2-[(2R,5Z)-2-carboxy-4-methylthiazol-5(2H)-ylidene]ethyl phosphate binding site. K146 provides a ligand contact to 4-amino-2-methyl-5-(diphosphooxymethyl)pyrimidine. 2-[(2R,5Z)-2-carboxy-4-methylthiazol-5(2H)-ylidene]ethyl phosphate-binding positions include G174 and 194-195 (IS).

This sequence belongs to the thiamine-phosphate synthase family. The cofactor is Mg(2+).

It catalyses the reaction 2-[(2R,5Z)-2-carboxy-4-methylthiazol-5(2H)-ylidene]ethyl phosphate + 4-amino-2-methyl-5-(diphosphooxymethyl)pyrimidine + 2 H(+) = thiamine phosphate + CO2 + diphosphate. The enzyme catalyses 2-(2-carboxy-4-methylthiazol-5-yl)ethyl phosphate + 4-amino-2-methyl-5-(diphosphooxymethyl)pyrimidine + 2 H(+) = thiamine phosphate + CO2 + diphosphate. It carries out the reaction 4-methyl-5-(2-phosphooxyethyl)-thiazole + 4-amino-2-methyl-5-(diphosphooxymethyl)pyrimidine + H(+) = thiamine phosphate + diphosphate. Its pathway is cofactor biosynthesis; thiamine diphosphate biosynthesis; thiamine phosphate from 4-amino-2-methyl-5-diphosphomethylpyrimidine and 4-methyl-5-(2-phosphoethyl)-thiazole: step 1/1. In terms of biological role, condenses 4-methyl-5-(beta-hydroxyethyl)thiazole monophosphate (THZ-P) and 2-methyl-4-amino-5-hydroxymethyl pyrimidine pyrophosphate (HMP-PP) to form thiamine monophosphate (TMP). The sequence is that of Thiamine-phosphate synthase from Methanosarcina barkeri (strain Fusaro / DSM 804).